The primary structure comprises 549 residues: Cytoplasmic trehalase (549 aa).

Residues R168, 175 to 176 (WD), N212, 221 to 223 (RSQ), 292 to 294 (RDE), and G324 contribute to the substrate site. Catalysis depends on proton donor/acceptor residues D326 and E509. E525 provides a ligand contact to substrate.

The protein belongs to the glycosyl hydrolase 37 family. As to quaternary structure, monomer.

It is found in the cytoplasm. It carries out the reaction alpha,alpha-trehalose + H2O = alpha-D-glucose + beta-D-glucose. Its pathway is glycan degradation; trehalose degradation; D-glucose from alpha,alpha-trehalose: step 1/1. Its function is as follows. Hydrolyzes trehalose to glucose. Could be involved, in cells returning to low osmolarity conditions, in the utilization of the accumulated cytoplasmic trehalose, which was synthesized in response to high osmolarity. This chain is Cytoplasmic trehalase, found in Shigella boydii serotype 4 (strain Sb227).